A 200-amino-acid chain; its full sequence is 3-isopropylmalate dehydratase small subunit (200 aa).

It belongs to the LeuD family. LeuD type 1 subfamily. In terms of assembly, heterodimer of LeuC and LeuD.

The catalysed reaction is (2R,3S)-3-isopropylmalate = (2S)-2-isopropylmalate. Its pathway is amino-acid biosynthesis; L-leucine biosynthesis; L-leucine from 3-methyl-2-oxobutanoate: step 2/4. Functionally, catalyzes the isomerization between 2-isopropylmalate and 3-isopropylmalate, via the formation of 2-isopropylmaleate. The chain is 3-isopropylmalate dehydratase small subunit from Haemophilus influenzae (strain 86-028NP).